Consider the following 353-residue polypeptide: Cytochrome c biogenesis protein CcsA (353 aa).

8 consecutive transmembrane segments (helical) span residues 15–35 (FAIL…PNLP), 37–57 (LAAL…TLLG), 68–88 (LSNL…VHLI), 97–117 (LVGV…TMTL), 142–162 (VMML…AFLI), 261–281 (IIGL…VWAN), 288–308 (WSWD…AAYL), and 322–342 (AILA…VNLL).

This sequence belongs to the CcmF/CycK/Ccl1/NrfE/CcsA family. In terms of assembly, may interact with ccs1.

It is found in the cellular thylakoid membrane. Required during biogenesis of c-type cytochromes (cytochrome c6 and cytochrome f) at the step of heme attachment. The polypeptide is Cytochrome c biogenesis protein CcsA (Nostoc punctiforme (strain ATCC 29133 / PCC 73102)).